Here is a 282-residue protein sequence, read N- to C-terminus: MPELPEVETVRKGLEKLLNDFYIERIEVLKERSIASNGGSKSFIDNVKNSYLGNWERRGKYLIGSLLTKEKFSKGFLVVHLRMTGQFKLLEKEVLACKHTRVRFFEERGRELRFIDIRNFGQMWHVPSSRSVPEIVSGIKRLGPEPFSDDFNSHYLEEYLKKKTRSIKSALLDQRTVAGVGNIYADETLFDAGINPKTESRNLKSNELKRLCNSLIKILNISIGEGGTTFSDFRDLEGGNGNYGGQALVYRRSGKNCKKCGEKILREKICGRSTHWCPNCQK.

Pro-2 functions as the Schiff-base intermediate with DNA in the catalytic mechanism. The active-site Proton donor is the Glu-3. Lys-60 acts as the Proton donor; for beta-elimination activity in catalysis. The DNA site is built by His-99, Arg-118, and Lys-163. The FPG-type zinc-finger motif lies at 248–282 (LVYRRSGKNCKKCGEKILREKICGRSTHWCPNCQK). Arg-272 (proton donor; for delta-elimination activity) is an active-site residue.

It belongs to the FPG family. In terms of assembly, monomer. Requires Zn(2+) as cofactor.

The enzyme catalyses Hydrolysis of DNA containing ring-opened 7-methylguanine residues, releasing 2,6-diamino-4-hydroxy-5-(N-methyl)formamidopyrimidine.. It carries out the reaction 2'-deoxyribonucleotide-(2'-deoxyribose 5'-phosphate)-2'-deoxyribonucleotide-DNA = a 3'-end 2'-deoxyribonucleotide-(2,3-dehydro-2,3-deoxyribose 5'-phosphate)-DNA + a 5'-end 5'-phospho-2'-deoxyribonucleoside-DNA + H(+). In terms of biological role, involved in base excision repair of DNA damaged by oxidation or by mutagenic agents. Acts as a DNA glycosylase that recognizes and removes damaged bases. Has a preference for oxidized purines, such as 7,8-dihydro-8-oxoguanine (8-oxoG). Has AP (apurinic/apyrimidinic) lyase activity and introduces nicks in the DNA strand. Cleaves the DNA backbone by beta-delta elimination to generate a single-strand break at the site of the removed base with both 3'- and 5'-phosphates. This Prochlorococcus marinus (strain NATL1A) protein is Formamidopyrimidine-DNA glycosylase.